The following is a 583-amino-acid chain: Ribonuclease ZC3H12A (583 aa).

Residues 1–11 (MSLWELEDRRS) show a composition bias toward basic and acidic residues. Disordered stretches follow at residues 1-29 (MSLW…EATT) and 73-119 (GSAA…GSDL). The segment covering 15–29 (TPRPAQEPTAEEATT) has biased composition (low complexity). Residues 26–71 (EATTAELQMKVDFFRKLGYSSAEIHSVLQKLGIQADTNTVLGELVK) form a ubiquitin association domain region. The necessary for interaction with TANK stretch occupies residues 65–134 (VLGELVKHGS…DGSNVAMSHG (70 aa)). A compositionally biased stretch (basic and acidic residues) spans 73–82 (GSAAERERQA). At S83 the chain carries Phosphoserine. The segment at 96 to 281 (GGGTPKAPTV…LDNFLRKKPL (186 aa)) is RNase. An RNase NYN domain is found at 119–274 (LRPIVIDGSN…LGRHGPSLDN (156 aa)). Residues 198–204 (RRVGGKR) form an RNA binding region. A Mg(2+)-binding site is contributed by D210. 2 disordered regions span residues 262 to 290 (DDPL…KQPC) and 323 to 404 (ANAL…PSEW). The C3H1-type zinc-finger motif lies at 284-309 (EHKKQPCPYGRKCTYGIKCRFLHPER). Positions 285–441 (HKKQPCPYGR…SELWGVRGGG (157 aa)) are necessary for interaction with ZC3H12D. Low complexity predominate over residues 341 to 352 (RPSPSSQPGSLP). The span at 353 to 364 (TEHEQCSPDRKK) shows a compositional bias: basic and acidic residues. Residues 384–393 (PTGRSLPPSG) show a composition bias toward low complexity. S422 and S426 each carry phosphoserine. The tract at residues 503-530 (YQLPPPTQRLQEPQAPGPGADRGPWGGA) is disordered.

Belongs to the ZC3H12 family. Oligomer. Found in a deubiquitination complex with TANK, USP10 and ZC3H12A; this complex inhibits genotoxic stress- or interleukin-1-beta-mediated NF-kappaB activation by promoting IKBKG or TRAF6 deubiquitination. Interacts with IKBKG; this interaction increases in response to DNA damage. Interacts with TANK; this interaction increases in response to DNA damage and serves as a bridge to anchor both TANK and USP10 into a deubiquitinating complex. Interacts with TRAF6; this interaction increases in response to DNA damage and is stimulated by TANK. Interacts with USP10; this interaction increases in response to DNA damage and serves as a bridge to anchor both TANK and USP10 into a deubiquitinating complex. Interacts with ZC3H12D. Interacts with TNRC6A. Interacts with IKBKB/IKKB. Interacts with IKBKB/IKKB. Interacts with BTRC; the interaction occurs when ZC3H12A is phosphorylated in a IKBKB/IKKB-dependent manner. Interacts with IRAK1; this interaction increases the interaction between ZC3H12A and IKBKB/IKKB. Interacts with UPF1; this interaction occurs in a mRNA translationally active- and termination-dependent manner and is essential for ZC3H12A-mediated degradation of target mRNAs. Associates with ribosomes. Interacts with ubiquitin. The cofactor is Mg(2+). In terms of processing, phosphorylated by IRAK1; phosphorylation is necessary for subsequent phosphorylation by the I-kappa-B-kinase (IKK) complex. Phosphorylated by I-kappa-B-kinase (IKK) subunits IKBKB/IKKB and CHUK/IKKA at Ser-422 and Ser-426; these phosphorylations promote ubiquitin proteasome-mediated degradation of ZC3H12A and hence facilitates rapid and robust production of IL-6 mRNA in response to toll-like receptor (TLR) or IL-1 receptor stimuli. Ubiquitinated; ubiquitination is induced in response to interleukin IL1 receptor stimuli in a IKBKB/IKKB and IRAK1-dependent manner, leading to proteasome-mediated degradation. Post-translationally, proteolytically cleaved between Arg-95 and Arg-198 by MALT1 in activated T-cells; cleavage at Arg-95 is critical for promoting ZC3H12A degradation in response to T-cell receptor (TCR) stimulation, and hence is necessary for prolonging the stability of a set of mRNAs controlling T-cell activation and Th17 cell differentiation.

It is found in the nucleus. It localises to the cytoplasm. The protein resides in the P-body. The protein localises to the rough endoplasmic reticulum membrane. Its subcellular location is the cytoplasmic granule. Endoribonuclease involved in various biological functions such as cellular inflammatory response and immune homeostasis, glial differentiation of neuroprogenitor cells, cell death of cardiomyocytes, adipogenesis and angiogenesis. Functions as an endoribonuclease involved in mRNA decay. Modulates the inflammatory response by promoting the degradation of a set of translationally active cytokine-induced inflammation-related mRNAs, such as IL6 and IL12B, during the early phase of inflammation. Prevents aberrant T-cell-mediated immune reaction by degradation of multiple mRNAs controlling T-cell activation, such as those encoding cytokines (IL6 and IL2), cell surface receptors (ICOS, TNFRSF4 and TNFR2) and transcription factor (REL). Inhibits cooperatively with ZC3H12A the differentiation of helper T cells Th17 in lungs. They repress target mRNA encoding the Th17 cell-promoting factors IL6, ICOS, REL, IRF4, NFKBID and NFKBIZ. The cooperation requires RNA-binding by RC3H1 and the nuclease activity of ZC3H12A. Together with RC3H1, destabilizes TNFRSF4/OX40 mRNA by binding to the conserved stem loop structure in its 3'UTR. Self regulates by destabilizing its own mRNA. Cleaves mRNA harboring a stem-loop (SL), often located in their 3'-UTRs, during the early phase of inflammation in a helicase UPF1-dependent manner. Plays a role in the inhibition of microRNAs (miRNAs) biogenesis. Cleaves the terminal loop of a set of precursor miRNAs (pre-miRNAs) important for the regulation of the inflammatory response leading to their degradation, and thus preventing the biosynthesis of mature miRNAs. Also plays a role in promoting angiogenesis in response to inflammatory cytokines by inhibiting the production of antiangiogenic microRNAs via its anti-dicer RNase activity. Affects the overall ubiquitination of cellular proteins. Positively regulates deubiquitinase activity promoting the cleavage at 'Lys-48'- and 'Lys-63'-linked polyubiquitin chains on TNF receptor-associated factors (TRAFs), preventing JNK and NF-kappa-B signaling pathway activation, and hence negatively regulating macrophage-mediated inflammatory response and immune homeostasis. Also induces deubiquitination of the transcription factor HIF1A, probably leading to its stabilization and nuclear import, thereby positively regulating the expression of proangiogenic HIF1A-targeted genes. Involved in a TANK-dependent negative feedback response to attenuate NF-kappaB activation through the deubiquitination of IKBKG or TRAF6 in response to interleukin-1-beta (IL1B) stimulation or upon DNA damage. Prevents stress granules (SGs) formation and promotes macrophage apoptosis under stress conditions, including arsenite-induced oxidative stress, heat shock, and energy deprivation. Plays a role in the regulation of macrophage polarization; promotes IL4-induced polarization of macrophages M1 into anti-inflammatory M2 state. May also act as a transcription factor that regulates the expression of multiple genes involved in inflammatory response, angiogenesis, adipogenesis and apoptosis. Functions as a positive regulator of glial differentiation of neuroprogenitor cells through an amyloid precursor protein (APP)-dependent signaling pathway. Attenuates septic myocardial contractile dysfunction in response to lipopolysaccharide (LPS) by reducing I-kappa-B-kinase (IKK)-mediated NF-kappa-B activation, and hence myocardial pro-inflammatory cytokine production. This is Ribonuclease ZC3H12A from Bos taurus (Bovine).